The primary structure comprises 210 residues: MADGSSDAAREPRPAPAPIRRRSSNYRAYATEPHAKKKSKISASRKLQLKTLLLQIAKQELEREAEERRGEKGRALSTRCQPLELAGLGFAELQDLCRQLHARVDKVDEERYDIEAKVTKNITEIADLTQKIFDLRGKFKRPTLRRVRISADAMMQALLGARAKESLDLRAHLKQVKKEDTEKENREVGDWRKNIDALSGMEGRKKKFES.

Residues 1–43 (MADGSSDAAREPRPAPAPIRRRSSNYRAYATEPHAKKKSKISA) form a disordered region. An N-acetylalanine modification is found at Ala-2. Phosphoserine is present on residues Ser-5 and Ser-6. Residues Ser-23 and Ser-24 each carry the phosphoserine; by PKA and PKD/PRKD1 modification. At Tyr-26 the chain carries Phosphotyrosine. Thr-31 carries the post-translational modification Phosphothreonine; by STK4/MST1. The segment at 32 to 79 (EPHAKKKSKISASRKLQLKTLLLQIAKQELEREAEERRGEKGRALSTR) is involved in binding TNC. Phosphoserine; by PKC/PRKCE occurs at positions 42 and 44. Thr-51 carries the phosphothreonine; by STK4/MST1 modification. Phosphoserine is present on Ser-77. Thr-78 is subject to Phosphothreonine. Thr-129 and Thr-143 each carry phosphothreonine; by STK4/MST1. The tract at residues 129–149 (TQKIFDLRGKFKRPTLRRVRI) is involved in binding TNC and actin. Ser-150 bears the Phosphoserine; by PAK3 mark. The residue at position 166 (Ser-166) is a Phosphoserine. Thr-181 is subject to Phosphothreonine. Ser-199 bears the Phosphoserine mark.

The protein belongs to the troponin I family. In terms of assembly, binds to actin and tropomyosin. Interacts with TRIM63. Interacts with STK4/MST1. In terms of processing, phosphorylated at Ser-42 and Ser-44 by PRKCE; phosphorylation increases myocardium contractile dysfunction. Phosphorylated at Ser-23 and Ser-24 by PRKD1; phosphorylation reduces myofilament calcium sensitivity. Phosphorylated preferentially at Thr-31. Phosphorylation by STK4/MST1 alters its binding affinity to TNNC1 (cardiac Tn-C) and TNNT2 (cardiac Tn-T).

Troponin I is the inhibitory subunit of troponin, the thin filament regulatory complex which confers calcium-sensitivity to striated muscle actomyosin ATPase activity. The chain is Troponin I, cardiac muscle (TNNI3) from Homo sapiens (Human).